We begin with the raw amino-acid sequence, 425 residues long: Histone-binding protein RBBP4-A (425 aa).

A2 is modified (N-acetylalanine). WD repeat units follow at residues 32 to 125, 126 to 175, 176 to 223, 225 to 270, 271 to 314, 315 to 371, and 372 to 404; these read YDLV…THDG, EVNR…RLRG, HQKE…KTIF, GHTA…HSVD, AHTA…HSFE, SHKD…FIHG, and GHTA…VWQM.

It belongs to the WD repeat RBAP46/RBAP48/MSI1 family. In terms of assembly, binds directly to histone H4, probably via helix 1 of the histone fold, a region that is not accessible when histone H4 is in chromatin. Probably forms a large corepressor complex that contains ncor1, sin3a, hdac1-A and/or hdac1-B, hdac2, rbbp4-A and/or rbbp4-B and possibly rbbp7.

The protein resides in the nucleus. It localises to the chromosome. The protein localises to the telomere. In terms of biological role, core histone-binding subunit that may target chromatin assembly factors, chromatin remodeling factors and histone deacetylases to their histone substrates in a manner that is regulated by nucleosomal DNA. Component of several complexes which regulate chromatin metabolism. The sequence is that of Histone-binding protein RBBP4-A (rbbp4-a) from Xenopus laevis (African clawed frog).